The chain runs to 699 residues: UvrABC system protein B (699 aa).

Residues 35 to 188 enclose the Helicase ATP-binding domain; sequence ERINNGEKDV…DHLLRKFVSM (154 aa). 48–55 serves as a coordination point for ATP; it reads GATGTGKS. A Beta-hairpin motif is present at residues 101-124; the sequence is YYDYYQPEAYVAQTDTFIEKDSSI. One can recognise a Helicase C-terminal domain in the interval 438-604; that stretch reads QIDDLLGEIR…PLRKKIADIT (167 aa). The UVR domain maps to 654-689; that stretch reads VGLIEQLTEQMHGAAAELQFEVAARIRDEVKELKRE.

The protein belongs to the UvrB family. Forms a heterotetramer with UvrA during the search for lesions. Interacts with UvrC in an incision complex.

It localises to the cytoplasm. In terms of biological role, the UvrABC repair system catalyzes the recognition and processing of DNA lesions. A damage recognition complex composed of 2 UvrA and 2 UvrB subunits scans DNA for abnormalities. Upon binding of the UvrA(2)B(2) complex to a putative damaged site, the DNA wraps around one UvrB monomer. DNA wrap is dependent on ATP binding by UvrB and probably causes local melting of the DNA helix, facilitating insertion of UvrB beta-hairpin between the DNA strands. Then UvrB probes one DNA strand for the presence of a lesion. If a lesion is found the UvrA subunits dissociate and the UvrB-DNA preincision complex is formed. This complex is subsequently bound by UvrC and the second UvrB is released. If no lesion is found, the DNA wraps around the other UvrB subunit that will check the other stand for damage. In Paenarthrobacter aurescens (strain TC1), this protein is UvrABC system protein B.